The chain runs to 265 residues: Diphthine synthase (265 aa).

S-adenosyl-L-methionine-binding positions include L9, D85, I88, 113-114 (TA), L168, A211, and H236.

Belongs to the diphthine synthase family. Homodimer.

It carries out the reaction 2-[(3S)-amino-3-carboxypropyl]-L-histidyl-[translation elongation factor 2] + 3 S-adenosyl-L-methionine = diphthine-[translation elongation factor 2] + 3 S-adenosyl-L-homocysteine + 3 H(+). The protein operates within protein modification; peptidyl-diphthamide biosynthesis. S-adenosyl-L-methionine-dependent methyltransferase that catalyzes the trimethylation of the amino group of the modified target histidine residue in translation elongation factor 2 (EF-2), to form an intermediate called diphthine. The three successive methylation reactions represent the second step of diphthamide biosynthesis. This Halorubrum lacusprofundi (strain ATCC 49239 / DSM 5036 / JCM 8891 / ACAM 34) protein is Diphthine synthase.